Reading from the N-terminus, the 66-residue chain is MDIKRALILFLLFLVVLSNAFVDYIISNFNHAVTCRKPTYFGIVLQGIFLVILFSIVDYLINENIL.

The first 20 residues, 1 to 20 (MDIKRALILFLLFLVVLSNA), serve as a signal peptide directing secretion. The Extracellular portion of the chain corresponds to 21–40 (FVDYIISNFNHAVTCRKPTY). The chain crosses the membrane as a helical span at residues 41 to 61 (FGIVLQGIFLVILFSIVDYLI). Residues 62-66 (NENIL) lie on the Cytoplasmic side of the membrane.

The protein belongs to the asfivirus B66L family.

It localises to the host membrane. The polypeptide is Transmembrane protein B66L (Ornithodoros (relapsing fever ticks)).